The following is a 617-amino-acid chain: MKVSLGNGDMGVSAHLQPCKSGTTRFFTSNTHSSVVLQGFDQLRIEGLLCDVTLVPGDGEEIFPVHRAMMASASDYFKAMFTGGMKEKDLMCIKLHGVNKVGLKKIIDFIYTAKLSLNMDNLQDTLEAASFLQILPVLDFCKVFLISGVSLDNCVEVGRIANTYNLIEVDKYVNNFILKNFPALLNTGEFLKLPFERLAFVLSSNSLKHCSELELFKAACRWLRLEDPRMDYAAKLMKNIRFPLMTPQDLINYVQTVDFMRTDNTCVNLLLEASNYQMMPYMQPVMQSDRTAIRSDSTHLVTLGGVLRQQLVVSKELRMYDERAQEWKSLAPMDAPRYQHGIAVIGNFLYVVGGQSNYDTKGKTAVDTVFRFDPRYNKWMQVASLNEKRTFFHLSALKGHLYAVGGRSAAGELATVECYNPRMNEWSYVAKMSEPHYGHAGTVYGGLMYISGGITHDTFQNELMCFDPDTDKWTQKAPMTTVRGLHCMCTVGDKLYVIGGNHFRGTSDYDDVLSCEYYSPTLDQWTPIAAMLRGQSDVGVAVFENKIYVVGGYSWNNRCMVEIVQKYDPEKDEWHKVFDLPESLGGIRACTLTVFPPEENPGSPSRESPLSAPSDHS.

A BTB domain is found at 50-119 (CDVTLVPGDG…IYTAKLSLNM (70 aa)). In terms of domain architecture, BACK spans 154 to 255 (CVEVGRIANT…TPQDLINYVQ (102 aa)). Kelch repeat units follow at residues 299 to 347 (HLVT…VIGN), 348 to 399 (FLYV…ALKG), 400 to 446 (HLYA…VYGG), 448 to 493 (MYIS…TVGD), 495 to 545 (LYVI…VFEN), and 546 to 594 (KIYV…TLTV). The segment at 595 to 617 (FPPEENPGSPSRESPLSAPSDHS) is disordered.

In terms of assembly, component of the BCR(KLHL9-KLHL13) E3 ubiquitin ligase complex, at least composed of CUL3, KLHL9, KLHL13 and RBX1. Interacts with AURKB.

It participates in protein modification; protein ubiquitination. In terms of biological role, substrate-specific adapter of a BCR (BTB-CUL3-RBX1) E3 ubiquitin-protein ligase complex required for mitotic progression and cytokinesis. The BCR(KLHL9-KLHL13) E3 ubiquitin ligase complex mediates the ubiquitination of AURKB and controls the dynamic behavior of AURKB on mitotic chromosomes and thereby coordinates faithful mitotic progression and completion of cytokinesis. The chain is Kelch-like protein 9 (Klhl9) from Mus musculus (Mouse).